Consider the following 446-residue polypeptide: D(1A) dopamine receptor (446 aa).

Topologically, residues 1-22 (MAPNTSTMDETGLPVERDFSFR) are extracellular. Asn4 is a glycosylation site (N-linked (GlcNAc...) asparagine). A helical transmembrane segment spans residues 23–48 (ILTACFLSLLILSTLLGNTLVCAAVI). Residues 49 to 59 (RFRHLRSKVTN) lie on the Cytoplasmic side of the membrane. A helical transmembrane segment spans residues 60 to 86 (FFVISLAVSDLLVAVLVMPWKAVAEIA). The Extracellular portion of the chain corresponds to 87–95 (GFWPFGSFC). A disulfide bond links Cys95 and Cys186. A helical membrane pass occupies residues 96–118 (NIWVAFDIMCSTASILNLCVISV). At 119–137 (DRYWAISSPFQYERKMTPK) the chain is on the cytoplasmic side. The helical transmembrane segment at 138–162 (AAFILISVAWTLSVLISFIPVQLSW) threads the bilayer. At 163–192 (HKAKPTWPLDGNFTSLEDAEDDNCDTRLSR) the chain is on the extracellular side. A helical transmembrane segment spans residues 193–218 (TYAISSSLISFYIPVAIMIVTYTSIY). Residues 219 to 272 (RIAQKQIRRISALERAAVHAKNCQTTTGNGNPVECSQSESSFKMSFKRETKVLK) are Cytoplasmic-facing. Residues 273–299 (TLSVIMGVFVCCWLPFFISNCMVPFCG) traverse the membrane as a helical segment. The Extracellular portion of the chain corresponds to 300-312 (SEETQPFCIDSIT). A helical transmembrane segment spans residues 313-337 (FDVFVWFGWANSSLNPIIYAFNADF). At 338–446 (QKAFSTLLGC…PVTHSGQHST (109 aa)) the chain is on the cytoplasmic side. Residues Cys347 and Cys351 are each lipidated (S-palmitoyl cysteine). Ser441 bears the Phosphoserine mark.

It belongs to the G-protein coupled receptor 1 family. Interacts with DNAJC14 via its C-terminus. Interacts with DRD2. Interacts with DORIP1.

It localises to the cell membrane. Its subcellular location is the endoplasmic reticulum membrane. The protein resides in the cell projection. The protein localises to the cilium membrane. It is found in the dendrite. It localises to the dendritic spine. Its function is as follows. Dopamine receptor whose activity is mediated by G proteins which activate adenylyl cyclase. This chain is D(1A) dopamine receptor (Drd1), found in Mus musculus (Mouse).